A 349-amino-acid chain; its full sequence is MIVNRYKDAGVDVNAGYELVRRIKGAVASTKRPGYVGNIGGFGGLFDLDSLGYDHPVLVSGTDGVGTKLIIAQKMDKNDTVGIDVVAMCVNDVLAQGAEPLFFLDYIACGHNDPALLASVVQGVAEGCKQAGASLIGGETAEMPDMYAPDEYDLAGFTVGVAEKDRLLSVDTPQAGDVLLGLASSGVHSNGFSLVRKILFKDHDVKLTDKPAELKGKSVGESLLAPTRIYIKSVLPLIKQGLVHGVAHITGGGLIENVPRMFNDGLRAEIAAGSWEVPDIFNYLKQVGNLSDDDCWQTFNMGLGMILAVPADKKEEAKKLLLASGEKVFEVGHLSERTDGEKIFIKLVE.

The protein belongs to the AIR synthase family.

The protein localises to the cytoplasm. It catalyses the reaction 2-formamido-N(1)-(5-O-phospho-beta-D-ribosyl)acetamidine + ATP = 5-amino-1-(5-phospho-beta-D-ribosyl)imidazole + ADP + phosphate + H(+). Its pathway is purine metabolism; IMP biosynthesis via de novo pathway; 5-amino-1-(5-phospho-D-ribosyl)imidazole from N(2)-formyl-N(1)-(5-phospho-D-ribosyl)glycinamide: step 2/2. This Lactobacillus delbrueckii subsp. bulgaricus (strain ATCC 11842 / DSM 20081 / BCRC 10696 / JCM 1002 / NBRC 13953 / NCIMB 11778 / NCTC 12712 / WDCM 00102 / Lb 14) protein is Phosphoribosylformylglycinamidine cyclo-ligase.